A 1983-amino-acid polypeptide reads, in one-letter code: Nonribosomal peptide synthetase verP (1983 aa).

Positions 11–405 (FAQAASRCPD…FRGRKDRTVK (395 aa)) are adenylation 1. The Carrier 1 domain maps to 526–602 (DRHLDTLLTV…DVAPLITSRA (77 aa)). Serine 563 bears the O-(pantetheine 4'-phosphoryl)serine mark. Residues 769 to 1047 (ETDELTVVLT…GQHFKHALYS (279 aa)) are condensation 1. The tract at residues 1089–1469 (QVMGQFPSLI…GRIDRLVKLR (381 aa)) is adenylation 2. Residues 1584–1662 (ITRPKIEDKL…DQINMVRALL (79 aa)) enclose the Carrier 2 domain. Serine 1622 carries the post-translational modification O-(pantetheine 4'-phosphoryl)serine. Residues 1652–1976 (KDQINMVRAL…GGLEHPLFEC (325 aa)) are condensation 2.

This sequence belongs to the NRP synthetase family.

It functions in the pathway mycotoxin biosynthesis. In terms of biological role, nonribosomal peptide synthetase; part of the gene cluster that mediates the biosynthesis of 11'-deoxyverticillin A, one of the dimeric epipolythiodioxopiperazines (ETPs) from the verticillin family that act as mycotoxins. 11'-deoxyverticillin A is required for normal conidiation. The nonribosomal peptide synthetase verP is speculated to be responsible for condensation of amino acids to form the carbon skeleton of verticillin, whereas the cluster-specific tailoring enzymes are involved in further modifications leading to the production of 11'-deoxyverticillin A. In Clonostachys rogersoniana, this protein is Nonribosomal peptide synthetase verP.